The primary structure comprises 85 residues: Large ribosomal subunit protein uL29 (85 aa).

The protein belongs to the universal ribosomal protein uL29 family.

This chain is Large ribosomal subunit protein uL29, found in Thermobifida fusca (strain YX).